We begin with the raw amino-acid sequence, 232 residues long: LexA repressor (232 aa).

The segment at residues 26–46 is a DNA-binding region (H-T-H motif); sequence FDEMKDALDLRSKSGIHRLIT. Residues S153 and K191 each act as for autocatalytic cleavage activity in the active site.

Belongs to the peptidase S24 family. Homodimer.

The enzyme catalyses Hydrolysis of Ala-|-Gly bond in repressor LexA.. Its function is as follows. Represses a number of genes involved in the response to DNA damage (SOS response), including recA and lexA. In the presence of single-stranded DNA, RecA interacts with LexA causing an autocatalytic cleavage which disrupts the DNA-binding part of LexA, leading to derepression of the SOS regulon and eventually DNA repair. The sequence is that of LexA repressor from Bradyrhizobium sp. (strain ORS 278).